Consider the following 177-residue polypeptide: Translation initiation factor IF-3 (177 aa).

This sequence belongs to the IF-3 family. As to quaternary structure, monomer.

The protein localises to the cytoplasm. IF-3 binds to the 30S ribosomal subunit and shifts the equilibrium between 70S ribosomes and their 50S and 30S subunits in favor of the free subunits, thus enhancing the availability of 30S subunits on which protein synthesis initiation begins. The protein is Translation initiation factor IF-3 of Rhizobium meliloti (strain 1021) (Ensifer meliloti).